A 421-amino-acid polypeptide reads, in one-letter code: WD repeat and SOCS box-containing protein 1 (421 aa).

6 WD repeats span residues 32–71 (KCGR…QNFL), 124–165 (SRCV…LLLN), 168–208 (DHTE…NMMK), 212–251 (GHQN…MIRK), 254–293 (GHHH…ILME), and 309–346 (ANDR…DYPV). The region spanning 372–421 (DGSVYFWATPRQVPSLQHLCRMSIRRVMPTQEVQELPIPSKLLEFLSYRI) is the SOCS box domain.

Interacts with DIO2. Component of the probable ECS(WSB1) E3 ubiquitin ligase complex which contains CUL5, RNF7/RBX2, Elongin BC complex and WSB1. Component of a probable ECS-like E3 ubiquitin-protein ligase complex which contains CUL5, RBX1, Elongin BC complex and WSB1. Interacts with CUL5, RNF7, ELOB and ELOC. Binds to HIPK2 through WD40 repeats.

Its pathway is protein modification; protein ubiquitination. Probable substrate-recognition component of a SCF-like ECS (Elongin-Cullin-SOCS-box protein) E3 ubiquitin ligase complex which mediates the ubiquitination and subsequent proteasomal degradation of target proteins. Recognizes type II iodothyronine deiodinase/DIO2. Confers constitutive instability to HIPK2 through proteasomal degradation. This Homo sapiens (Human) protein is WD repeat and SOCS box-containing protein 1 (WSB1).